A 203-amino-acid polypeptide reads, in one-letter code: Urease accessory protein UreE (203 aa).

The interval 170-203 is disordered; the sequence is EHHGHSHSHSHSHSHDHDHQHGPSCSHGHHHGHR.

It belongs to the UreE family.

The protein resides in the cytoplasm. Its function is as follows. Involved in urease metallocenter assembly. Binds nickel. Probably functions as a nickel donor during metallocenter assembly. This is Urease accessory protein UreE from Burkholderia mallei (strain SAVP1).